Consider the following 133-residue polypeptide: ELEKEFQKQKYLSTPDRLDLAQSLGLTQLQVKTWYQNRRMKWKKMVLKGGQEAPTKPKGRPKKNSIPTSEEIEAEEKLNSQVQSQELREPSQGLEGLCDTQEPKARVVPVEVAESPGQAQELPVTSPEPPPSS.

The homeobox DNA-binding region spans 1-46; sequence ELEKEFQKQKYLSTPDRLDLAQSLGLTQLQVKTWYQNRRMKWKKMV. Positions 45-133 are disordered; the sequence is MVLKGGQEAP…VTSPEPPPSS (89 aa).

This sequence belongs to the BAR homeobox family. As to expression, expressed in keratinizing epithelia such as wool follicle, tongue and esophagus. Expressed at low level in thymus. Not detected in spleen, skeletal muscle, brain, heart kidney, liver and lung.

It localises to the nucleus. Its function is as follows. Transcription factor. Binds optimally to the DNA consensus sequence 5'-YYTAATGRTTTTY-3'. May control the expression of neural adhesion molecules such as L1 or Ng-CAM during embryonic development of both the central and peripherical nervous system. May be involved in controlling adhesive processes in keratinizing epithelia. This chain is Homeobox protein BarH-like 2 (BARX2), found in Ovis aries (Sheep).